Here is a 409-residue protein sequence, read N- to C-terminus: LL-diaminopimelate aminotransferase (409 aa).

2 residues coordinate substrate: tyrosine 15 and glycine 42. Pyridoxal 5'-phosphate is bound by residues tyrosine 72, 108 to 109, tyrosine 132, asparagine 186, tyrosine 217, and 245 to 247; these read AK and SFS. The substrate site is built by lysine 109, tyrosine 132, and asparagine 186. Lysine 248 is modified (N6-(pyridoxal phosphate)lysine). Positions 256 and 291 each coordinate pyridoxal 5'-phosphate. Positions 291 and 387 each coordinate substrate.

The protein belongs to the class-I pyridoxal-phosphate-dependent aminotransferase family. LL-diaminopimelate aminotransferase subfamily. Homodimer. The cofactor is pyridoxal 5'-phosphate.

The catalysed reaction is (2S,6S)-2,6-diaminopimelate + 2-oxoglutarate = (S)-2,3,4,5-tetrahydrodipicolinate + L-glutamate + H2O + H(+). It participates in amino-acid biosynthesis; L-lysine biosynthesis via DAP pathway; LL-2,6-diaminopimelate from (S)-tetrahydrodipicolinate (aminotransferase route): step 1/1. Involved in the synthesis of meso-diaminopimelate (m-DAP or DL-DAP), required for both lysine and peptidoglycan biosynthesis. Catalyzes the direct conversion of tetrahydrodipicolinate to LL-diaminopimelate. The chain is LL-diaminopimelate aminotransferase from Phocaeicola vulgatus (strain ATCC 8482 / DSM 1447 / JCM 5826 / CCUG 4940 / NBRC 14291 / NCTC 11154) (Bacteroides vulgatus).